The sequence spans 78 residues: Large ribosomal subunit protein bL28 (78 aa).

A disordered region spans residues 1–25; it reads MSRVCQVTGKRPAVGNNRSHAKNAT.

It belongs to the bacterial ribosomal protein bL28 family.

The protein is Large ribosomal subunit protein bL28 of Vibrio cholerae serotype O1 (strain ATCC 39541 / Classical Ogawa 395 / O395).